A 293-amino-acid polypeptide reads, in one-letter code: Taste receptor type 2 member 143 (293 aa).

Residues 1-6 (MPSTPT) lie on the Extracellular side of the membrane. A helical transmembrane segment spans residues 7-27 (LIFIIIFYLVSLASMLQNGFM). Residues 28-55 (MIVLGREWMRNRTLPAADMIVASLASSR) are Cytoplasmic-facing. A helical membrane pass occupies residues 56-76 (FCLHGIAILANLLASFDFCYQ). Residues 77 to 79 (ANL) are Extracellular-facing. Residues 80-100 (IGILWDFTNTLIFWLTAWLAI) traverse the membrane as a helical segment. At 101-127 (FYCVKISSFSHPVLFWLKWRISQLVPR) the chain is on the cytoplasmic side. The chain crosses the membrane as a helical span at residues 128–148 (LLVVSLIIGGLSAVISATGNF). The Extracellular segment spans residues 149–181 (MANQMTISQGFHGNCTFGHMSLDFYRYYYLYHS). An N-linked (GlcNAc...) asparagine glycan is attached at N162. The chain crosses the membrane as a helical span at residues 182-202 (VLMWFTPFFLFLVSVIVLMFS). At 203–227 (LYQHVEKMRGHRPGPWDLHTQAHTM) the chain is on the cytoplasmic side. Residues 228 to 248 (ALKSLTFFFIFYIFFFLALVI) form a helical membrane-spanning segment. The Extracellular segment spans residues 249–264 (SSTKRKSMQSYYWARE). The helical transmembrane segment at 265–285 (AIIYTGIFLNSIILLFSNPKL) threads the bilayer. Residues 286 to 293 (RKALKMRF) are Cytoplasmic-facing.

This sequence belongs to the G-protein coupled receptor T2R family.

The protein localises to the membrane. Putative taste receptor which may play a role in the perception of bitterness. This Mus musculus (Mouse) protein is Taste receptor type 2 member 143 (Tas2r143).